The following is a 473-amino-acid chain: Ribulose bisphosphate carboxylase large chain (473 aa).

Substrate contacts are provided by N116 and T166. K168 (proton acceptor) is an active-site residue. K170 is a binding site for substrate. Residues K194, D196, and E197 each contribute to the Mg(2+) site. The residue at position 194 (K194) is an N6-carboxylysine. Residue H287 is the Proton acceptor of the active site. R288, H320, and S372 together coordinate substrate.

It belongs to the RuBisCO large chain family. Type I subfamily. Heterohexadecamer of 8 large chains and 8 small chains. It depends on Mg(2+) as a cofactor.

It carries out the reaction 2 (2R)-3-phosphoglycerate + 2 H(+) = D-ribulose 1,5-bisphosphate + CO2 + H2O. It catalyses the reaction D-ribulose 1,5-bisphosphate + O2 = 2-phosphoglycolate + (2R)-3-phosphoglycerate + 2 H(+). Its function is as follows. RuBisCO catalyzes two reactions: the carboxylation of D-ribulose 1,5-bisphosphate, the primary event in carbon dioxide fixation, as well as the oxidative fragmentation of the pentose substrate. Both reactions occur simultaneously and in competition at the same active site. This Rhodobacter capsulatus (strain ATCC BAA-309 / NBRC 16581 / SB1003) protein is Ribulose bisphosphate carboxylase large chain.